A 130-amino-acid chain; its full sequence is Small ribosomal subunit protein uS9 (130 aa).

The interval 105–130 is disordered; that stretch reads TRDPRMKERKKYGLHKARKAPQYSKR. Residues 111–130 are compositionally biased toward basic residues; it reads KERKKYGLHKARKAPQYSKR.

The protein belongs to the universal ribosomal protein uS9 family.

The protein is Small ribosomal subunit protein uS9 of Syntrophomonas wolfei subsp. wolfei (strain DSM 2245B / Goettingen).